The chain runs to 119 residues: Beta-2-microglobulin (119 aa).

An N-terminal signal peptide occupies residues 1–20 (MACFVVVALLVLLSLSGLEA). The region spanning 25-114 (PKIQVYSRHP…VTFSTPKTVK (90 aa)) is the Ig-like C1-type domain. A disulfide bridge connects residues C45 and C100.

It belongs to the beta-2-microglobulin family. In terms of assembly, heterodimer of an alpha chain and a beta chain. Beta-2-microglobulin is the beta-chain of major histocompatibility complex class I molecules.

The protein resides in the secreted. Functionally, component of the class I major histocompatibility complex (MHC). Involved in the presentation of peptide antigens to the immune system. This is Beta-2-microglobulin (B2M) from Leontopithecus chrysopygus (Golden-rumped lion tamarin).